The sequence spans 943 residues: Neutral alpha-glucosidase AB (943 aa).

The signal sequence occupies residues 1 to 23; that stretch reads MRKLVILIILSIVCSLFIGSIES. The tract at residues 186 to 231 is disordered; sequence FEPISDKPQPLPPKEKKSEEENKEANQEEDNNNNNNDNNEEQQVST. The span at 198 to 211 shows a compositional bias: basic and acidic residues; the sequence is PKEKKSEEENKEAN. The Nucleophile role is filled by Asp540. The active site involves Glu543. Asp617 functions as the Proton donor in the catalytic mechanism. Asn878, Asn887, and Asn907 each carry an N-linked (GlcNAc...) asparagine glycan.

Belongs to the glycosyl hydrolase 31 family.

The protein resides in the endoplasmic reticulum. It is found in the golgi apparatus. The catalysed reaction is N(4)-(alpha-D-Glc-(1-&gt;3)-alpha-D-Man-(1-&gt;2)-alpha-D-Man-(1-&gt;2)-alpha-D-Man-(1-&gt;3)-[alpha-D-Man-(1-&gt;2)-alpha-D-Man-(1-&gt;3)-[alpha-D-Man-(1-&gt;2)-alpha-D-Man-(1-&gt;6)]-alpha-D-Man-(1-&gt;6)]-beta-D-Man-(1-&gt;4)-beta-D-GlcNAc-(1-&gt;4)-beta-D-GlcNAc)-L-asparaginyl-[protein] + H2O = N(4)-(alpha-D-Man-(1-&gt;2)-alpha-D-Man-(1-&gt;2)-alpha-D-Man-(1-&gt;3)-[alpha-D-Man-(1-&gt;2)-alpha-D-Man-(1-&gt;3)-[alpha-D-Man-(1-&gt;2)-alpha-D-Man-(1-&gt;6)]-alpha-D-Man-(1-&gt;6)]-beta-D-Man-(1-&gt;4)-beta-D-GlcNAc-(1-&gt;4)-beta-D-GlcNAc)-L-asparaginyl-[protein] (N-glucan mannose isomer 9A1,2,3B1,2,3) + beta-D-glucose. It catalyses the reaction N(4)-(alpha-D-Glc-(1-&gt;3)-alpha-D-Glc-(1-&gt;3)-alpha-D-Man-(1-&gt;2)-alpha-D-Man-(1-&gt;2)-alpha-D-Man-(1-&gt;3)-[alpha-D-Man-(1-&gt;2)-alpha-D-Man-(1-&gt;3)-[alpha-D-Man-(1-&gt;2)-alpha-D-Man-(1-&gt;6)]-alpha-D-Man-(1-&gt;6)]-beta-D-Man-(1-&gt;4)-beta-D-GlcNAc-(1-&gt;4)-beta-D-GlcNAc)-L-asparaginyl-[protein] + H2O = N(4)-(alpha-D-Glc-(1-&gt;3)-alpha-D-Man-(1-&gt;2)-alpha-D-Man-(1-&gt;2)-alpha-D-Man-(1-&gt;3)-[alpha-D-Man-(1-&gt;2)-alpha-D-Man-(1-&gt;3)-[alpha-D-Man-(1-&gt;2)-alpha-D-Man-(1-&gt;6)]-alpha-D-Man-(1-&gt;6)]-beta-D-Man-(1-&gt;4)-beta-D-GlcNAc-(1-&gt;4)-beta-D-GlcNAc)-L-asparaginyl-[protein] + beta-D-glucose. It functions in the pathway glycan metabolism; N-glycan metabolism. Functionally, cleaves sequentially the 2 innermost alpha-1,3-linked glucose residues from N-linked oligosaccharides on newly synthesized glycoproteins. This chain is Neutral alpha-glucosidase AB (modA), found in Dictyostelium discoideum (Social amoeba).